Here is a 240-residue protein sequence, read N- to C-terminus: MNAEKSPENHNVDHEEIAKFEAVASRWWDLEGEFKPLHRINPLRLGYIAERAGGLFGKKVLDVGCGGGILAESMAREGATVTGLDMGFEPLQVAKLHALESGIQVDYVQETVEEHAAKHAGQYDVVTCMEMLEHVPDPQSVVRACAQLVKPGGDVFFSTLNRNGKSWLMAVVGAEYILRMVPKGTHDVKKFIKPAELLGWVDQTSLKERHITGLHYNPITNTFKLGPGVDVNYMLHTQNK.

S-adenosyl-L-methionine contacts are provided by arginine 44, glycine 64, aspartate 85, and methionine 129.

This sequence belongs to the methyltransferase superfamily. UbiG/COQ3 family.

The enzyme catalyses a 3-demethylubiquinol + S-adenosyl-L-methionine = a ubiquinol + S-adenosyl-L-homocysteine + H(+). It catalyses the reaction a 3-(all-trans-polyprenyl)benzene-1,2-diol + S-adenosyl-L-methionine = a 2-methoxy-6-(all-trans-polyprenyl)phenol + S-adenosyl-L-homocysteine + H(+). Its pathway is cofactor biosynthesis; ubiquinone biosynthesis. O-methyltransferase that catalyzes the 2 O-methylation steps in the ubiquinone biosynthetic pathway. The chain is Ubiquinone biosynthesis O-methyltransferase from Escherichia coli (strain ATCC 8739 / DSM 1576 / NBRC 3972 / NCIMB 8545 / WDCM 00012 / Crooks).